Reading from the N-terminus, the 260-residue chain is Triosephosphate isomerase (260 aa).

11–13 (NWK) contacts substrate. His103 serves as the catalytic Electrophile. The active-site Proton acceptor is the Glu175. Substrate contacts are provided by residues Gly181, Ser220, and 241 to 242 (GG).

Belongs to the triosephosphate isomerase family. Homodimer.

The protein resides in the cytoplasm. The enzyme catalyses D-glyceraldehyde 3-phosphate = dihydroxyacetone phosphate. The protein operates within carbohydrate biosynthesis; gluconeogenesis. It functions in the pathway carbohydrate degradation; glycolysis; D-glyceraldehyde 3-phosphate from glycerone phosphate: step 1/1. Functionally, involved in the gluconeogenesis. Catalyzes stereospecifically the conversion of dihydroxyacetone phosphate (DHAP) to D-glyceraldehyde-3-phosphate (G3P). In Shewanella sediminis (strain HAW-EB3), this protein is Triosephosphate isomerase.